Reading from the N-terminus, the 384-residue chain is Transcription factor 7 (384 aa).

The segment covering 1 to 16 (MPQLDSGGGGAGGGDD) has biased composition (gly residues). The segment at 1–59 (MPQLDSGGGGAGGGDDLGAPDELLAFQDEGEEQDDKSRDSAAGPERDLAELKSSLVNES) is CTNNB1-binding. 3 disordered regions span residues 1–88 (MPQL…LGRE), 133–183 (PPSG…QKQV), and 337–384 (SARD…MTVL). Residues 35–50 (DKSRDSAAGPERDLAE) are compositionally biased toward basic and acidic residues. Residues 62–78 (AAGGAGIPGVPGAGAGA) show a composition bias toward gly residues. A DNA-binding region (HMG box) is located at residues 269 to 337 (IKKPLNAFML…LHMQLYPGWS (69 aa)). A Nuclear localization signal motif is present at residues 344–348 (KKKRR). The segment covering 352–370 (KHQESTTGGKRNAFGTYPE) has biased composition (basic and acidic residues). Over residues 374–384 (APAPFLPMTVL) the composition is skewed to low complexity.

It belongs to the TCF/LEF family. As to quaternary structure, binds the armadillo repeat of CTNNB1 and forms a stable complex. Interacts with TLE5, TLE1, TLE2, TLE3 and TLE4. Interacts with MLLT11. Long isoform interacts (via N-terminus) with SOX13; inhibits WNT-mediated transcriptional activity. Interacts with DAZAP2. Predominantly expressed in T-cells. Also detected in proliferating intestinal epithelial cells and in the basal epithelial cells of mammary gland epithelium.

The protein resides in the nucleus. Its function is as follows. Transcriptional activator involved in T-cell lymphocyte differentiation. Necessary for the survival of CD4(+) CD8(+) immature thymocytes. Isoforms lacking the N-terminal CTNNB1 binding domain cannot fulfill this role. Binds to the T-lymphocyte-specific enhancer element (5'-WWCAAAG-3') found in the promoter of the CD3E gene. Represses expression of the T-cell receptor gamma gene in alpha-beta T-cell lineages. Required for the development of natural killer receptor-positive lymphoid tissue inducer T-cells. TLE1, TLE2, TLE3 and TLE4 repress transactivation mediated by TCF7 and CTNNB1. May also act as feedback transcriptional repressor of CTNNB1 and TCF7L2 target genes. The chain is Transcription factor 7 from Homo sapiens (Human).